We begin with the raw amino-acid sequence, 215 residues long: Protein-L-isoaspartate O-methyltransferase (215 aa).

The active site involves Ser-62.

The protein belongs to the methyltransferase superfamily. L-isoaspartyl/D-aspartyl protein methyltransferase family.

The protein resides in the cytoplasm. It catalyses the reaction [protein]-L-isoaspartate + S-adenosyl-L-methionine = [protein]-L-isoaspartate alpha-methyl ester + S-adenosyl-L-homocysteine. Catalyzes the methyl esterification of L-isoaspartyl residues in peptides and proteins that result from spontaneous decomposition of normal L-aspartyl and L-asparaginyl residues. It plays a role in the repair and/or degradation of damaged proteins. This is Protein-L-isoaspartate O-methyltransferase from Ruegeria pomeroyi (strain ATCC 700808 / DSM 15171 / DSS-3) (Silicibacter pomeroyi).